A 487-amino-acid chain; its full sequence is MPMSLNQLFPQAERDLLIRELTLDSRGVRPGDLFLAVPGGRQDGRAHIADALAKGAAAVAYEAEGAGELPPSDAPLIAVKGLAAQLSAVAGRFYGEPSRGLDLIGVTGTNGKTSVSQLVAQALDLLGERCGIVGTLGTGFYGALESGRHTTPDPLAVQATLATLKQAGARAVAMEVSSHGLDQGRVAALGFDIAVFTNLSRDHLDYHGSMEAYAAAKAKLFAWPGLRCRVINLDDDFGRRLAGEEQDSELITYSLTDSSAFLYCREARFGDAGIEAALVTPHGEGLLRSPLLGRFNLSNLLAAVGALLGLGYPLGDILRTLPQLQGPVGRMQRLGGGDKPLVVVDYAHTPDALEKVLEALRPHAAARLLCLFGCGGDRDAGKRPLMAAIAERLADEVLVTDDNPRTEASAAIIADIRKGFAAADKVTFLPSRGEAIAHLIASAAVDDVVLLAGKGHEDYQEIDGVRHPFSDIEQAERALAAWEVPHA.

Residues L23 and S25 each contribute to the UDP-N-acetyl-alpha-D-muramoyl-L-alanyl-D-glutamate site. 108–114 (GTNGKTS) provides a ligand contact to ATP. Residues 150–151 (TT), S177, Q183, and R185 contribute to the UDP-N-acetyl-alpha-D-muramoyl-L-alanyl-D-glutamate site. An N6-carboxylysine modification is found at K217. Residues R378, 402–405 (DNPR), G453, and E457 each bind meso-2,6-diaminopimelate. The short motif at 402–405 (DNPR) is the Meso-diaminopimelate recognition motif element.

The protein belongs to the MurCDEF family. MurE subfamily. Mg(2+) serves as cofactor. In terms of processing, carboxylation is probably crucial for Mg(2+) binding and, consequently, for the gamma-phosphate positioning of ATP.

Its subcellular location is the cytoplasm. It catalyses the reaction UDP-N-acetyl-alpha-D-muramoyl-L-alanyl-D-glutamate + meso-2,6-diaminopimelate + ATP = UDP-N-acetyl-alpha-D-muramoyl-L-alanyl-gamma-D-glutamyl-meso-2,6-diaminopimelate + ADP + phosphate + H(+). It participates in cell wall biogenesis; peptidoglycan biosynthesis. Functionally, catalyzes the addition of meso-diaminopimelic acid to the nucleotide precursor UDP-N-acetylmuramoyl-L-alanyl-D-glutamate (UMAG) in the biosynthesis of bacterial cell-wall peptidoglycan. This Pseudomonas aeruginosa (strain ATCC 15692 / DSM 22644 / CIP 104116 / JCM 14847 / LMG 12228 / 1C / PRS 101 / PAO1) protein is UDP-N-acetylmuramoyl-L-alanyl-D-glutamate--2,6-diaminopimelate ligase.